The chain runs to 1109 residues: Protein translocase subunit SecA (1109 aa).

ATP contacts are provided by residues Gln175, 193–197 (GEGKT), and Asp695. Residues 1038–1109 (VRQAAPEQRQ…KYKNCHGRNS (72 aa)) are disordered. Composition is skewed to basic and acidic residues over residues 1045-1059 (QRQDMSKYREQKQDL) and 1071-1088 (DTREAVKREPIRAEKTVG). Residues Cys1093, Cys1095, Cys1104, and His1105 each coordinate Zn(2+). The span at 1099–1109 (KKYKNCHGRNS) shows a compositional bias: basic residues.

The protein belongs to the SecA family. Monomer and homodimer. Part of the essential Sec protein translocation apparatus which comprises SecA, SecYEG and auxiliary proteins SecDF. Other proteins may also be involved. Requires Zn(2+) as cofactor.

The protein localises to the cell inner membrane. It is found in the cytoplasm. It carries out the reaction ATP + H2O + cellular proteinSide 1 = ADP + phosphate + cellular proteinSide 2.. Its function is as follows. Part of the Sec protein translocase complex. Interacts with the SecYEG preprotein conducting channel. Has a central role in coupling the hydrolysis of ATP to the transfer of proteins into and across the cell membrane, serving as an ATP-driven molecular motor driving the stepwise translocation of polypeptide chains across the membrane. The polypeptide is Protein translocase subunit SecA (Bacteroides fragilis (strain ATCC 25285 / DSM 2151 / CCUG 4856 / JCM 11019 / LMG 10263 / NCTC 9343 / Onslow / VPI 2553 / EN-2)).